The sequence spans 310 residues: Aspartate carbamoyltransferase catalytic subunit 2 (310 aa).

Residues R55 and T56 each contribute to the carbamoyl phosphate site. K85 is a binding site for L-aspartate. Positions 106, 134, and 137 each coordinate carbamoyl phosphate. Residues R167 and R228 each contribute to the L-aspartate site. Carbamoyl phosphate contacts are provided by L266 and P267.

This sequence belongs to the aspartate/ornithine carbamoyltransferase superfamily. ATCase family. As to quaternary structure, heterododecamer (2C3:3R2) of six catalytic PyrB chains organized as two trimers (C3), and six regulatory PyrI chains organized as three dimers (R2).

The enzyme catalyses carbamoyl phosphate + L-aspartate = N-carbamoyl-L-aspartate + phosphate + H(+). It functions in the pathway pyrimidine metabolism; UMP biosynthesis via de novo pathway; (S)-dihydroorotate from bicarbonate: step 2/3. Its function is as follows. Catalyzes the condensation of carbamoyl phosphate and aspartate to form carbamoyl aspartate and inorganic phosphate, the committed step in the de novo pyrimidine nucleotide biosynthesis pathway. The protein is Aspartate carbamoyltransferase catalytic subunit 2 of Shewanella halifaxensis (strain HAW-EB4).